We begin with the raw amino-acid sequence, 396 residues long: Chorismate synthase (396 aa).

R40 and R46 together coordinate NADP(+). Residues 134–136 (RSS), 257–258 (QA), G302, 317–321 (KPIPS), and R343 each bind FMN.

This sequence belongs to the chorismate synthase family. As to quaternary structure, homotetramer. The cofactor is FMNH2.

The catalysed reaction is 5-O-(1-carboxyvinyl)-3-phosphoshikimate = chorismate + phosphate. The protein operates within metabolic intermediate biosynthesis; chorismate biosynthesis; chorismate from D-erythrose 4-phosphate and phosphoenolpyruvate: step 7/7. Functionally, catalyzes the anti-1,4-elimination of the C-3 phosphate and the C-6 proR hydrogen from 5-enolpyruvylshikimate-3-phosphate (EPSP) to yield chorismate, which is the branch point compound that serves as the starting substrate for the three terminal pathways of aromatic amino acid biosynthesis. This reaction introduces a second double bond into the aromatic ring system. This Bifidobacterium animalis subsp. lactis (strain AD011) protein is Chorismate synthase.